We begin with the raw amino-acid sequence, 332 residues long: Succinylglutamate desuccinylase (332 aa).

3 residues coordinate Zn(2+): histidine 59, glutamate 62, and histidine 151. Glutamate 215 is an active-site residue.

This sequence belongs to the AspA/AstE family. Succinylglutamate desuccinylase subfamily. Zn(2+) is required as a cofactor.

The enzyme catalyses N-succinyl-L-glutamate + H2O = L-glutamate + succinate. Its pathway is amino-acid degradation; L-arginine degradation via AST pathway; L-glutamate and succinate from L-arginine: step 5/5. Transforms N(2)-succinylglutamate into succinate and glutamate. In Pseudomonas aeruginosa (strain UCBPP-PA14), this protein is Succinylglutamate desuccinylase.